The chain runs to 457 residues: Chromogranin-A (457 aa).

The first 18 residues, 1-18 (MRSAAVLALLLCAGQVTA), serve as a signal peptide directing secretion. A disulfide bond links Cys-35 and Cys-56. Residues 41 to 59 (SDTLSKPSPMPVSQECFET) form an O-glycosylated at one site only in cerebrospinal fluid region. The segment at 88–440 (KERAHQQKKH…DQELESLSAI (353 aa)) is disordered. The segment covering 116 to 144 (ELKEAVEEPSSKDVMEKREDSKEAEKSGE) has biased composition (basic and acidic residues). The residue at position 142 (Ser-142) is a Phosphoserine. Acidic residues predominate over residues 171-180 (GEEEEEEEEA). O-linked (GalNAc...) threonine glycans are attached at residues Thr-181 and Thr-183. The tract at residues 181 to 191 (TNTHPPASLPS) is O-glycosylated at one site only in cerebrospinal fluid. Residues 182–191 (NTHPPASLPS) show a composition bias toward polar residues. The residue at position 194 (Tyr-194) is a Phosphotyrosine. Phosphoserine occurs at positions 203 and 218. Positions 229–249 (EEEEEEEEAEAGEEAVPEEEG) are enriched in acidic residues. A glycan (O-linked (GalNAc...) threonine) is linked at Thr-251. Composition is skewed to basic and acidic residues over residues 263 to 272 (KEIRKGESRS) and 291 to 303 (PEGK…SQQK). Ser-270 and Ser-300 each carry phosphoserine. Glycine amide is present on Gly-319. Ser-322, Ser-333, and Ser-371 each carry phosphoserine. Positions 330–360 (ERLSKEWEDSKRWSKMDQLAKELTAEKRLEG) are enriched in basic and acidic residues. Met-372 carries the post-translational modification Methionine sulfoxide. Residues Ser-398, Ser-402, Ser-424, and Ser-438 each carry the phosphoserine modification. Residues 414–431 (YPEEKKEEEGSANRRPED) show a composition bias toward basic and acidic residues. The O-linked (Xyl...) (chondroitin sulfate) serine glycan is linked to Ser-424. Arg-456 carries the arginine amide modification.

Belongs to the chromogranin/secretogranin protein family. As to quaternary structure, self-interacts; self-assembly is promoted in vitro by chondroitin sulfate attachment which occurs at mildly acidic pH conditions. Interacts with SCG3. Interacts with ITPR1 in the secretory granules. In terms of processing, sulfated on tyrosine residues and/or contains sulfated glycans. O-glycosylated with core 1 or possibly core 8 glycans. Contains chondroitin sulfate (CS); CS attachment is pH-dependent, being observed at mildly acidic conditions of pH 5 but not at neutral pH, and promotes self-assembly in vitro. Post-translationally, proteolytic processing gives rise to an additional longer form of catestatin (residues 358-390) which displays a less potent catecholamine release-inhibitory activity. Plasmin-mediated proteolytic processing can give rise to additional shorter and longer forms of catestatin peptides. As to expression, detected in cerebrospinal fluid (at protein level). Detected in urine (at protein level). In terms of tissue distribution, found in the brain.

The protein resides in the secreted. It localises to the cytoplasmic vesicle. It is found in the secretory vesicle. The protein localises to the neuronal dense core vesicle. Strongly inhibits glucose induced insulin release from the pancreas. Its function is as follows. Inhibits catecholamine release from chromaffin cells and noradrenergic neurons by acting as a non-competitive nicotinic cholinergic antagonist. Displays antibacterial activity against Gram-positive bacteria S.aureus and M.luteus, and Gram-negative bacteria E.coli and P.aeruginosa. Can induce mast cell migration, degranulation and production of cytokines and chemokines. Acts as a potent scavenger of free radicals in vitro. May play a role in the regulation of cardiac function and blood pressure. Functionally, regulates granule biogenesis in endocrine cells by up-regulating the transcription of protease nexin 1 (SERPINE2) via a cAMP-PKA-SP1 pathway. This leads to inhibition of granule protein degradation in the Golgi complex which in turn promotes granule formation. The protein is Chromogranin-A (CHGA) of Homo sapiens (Human).